The chain runs to 391 residues: MAKSKFERTKPHVNIGTIGHVDHGKTSLTAAITKFFGEFKAYDQIDAAPEERARGITISTAHVEYETPNRHYAHVDCPGHADYVKNMITGAAQMDGAILVVSAADGPMPQTREHILLARQVGVPAIVVFLNKCDQVDDAELLELVELEVRELLSKYDFPGDEVPIIKGSALAALEDSSKELGEDAVRSLMAAVDDYIPTPERPIDQPFLMPIEDVFSISGRGTVVTGRVERGIVKVGEEVEIVGIKATAKTTVTGVEMFRKLLDQGQAGDNIGALIRGVGREDVERGQVLCKPGSVKPHTKFKAEAYILTKDEGGRHTPFFTNYRPQFYFRTTDVTGVVTLPEGTEMVMPGDNVAMDVTLIVPIAMEEKLRFAIREGGRTVGAGIVSSIIE.

The 192-residue stretch at Lys10–Glu201 folds into the tr-type G domain. The segment at Gly19 to Thr26 is G1. Gly19 to Thr26 provides a ligand contact to GTP. Thr26 serves as a coordination point for Mg(2+). The tract at residues Gly55–Ser59 is G2. The interval Asp76–Gly79 is G3. Residues Asp76–His80 and Asn131–Asp134 contribute to the GTP site. The tract at residues Asn131 to Asp134 is G4. The segment at Ser169–Leu171 is G5.

The protein belongs to the TRAFAC class translation factor GTPase superfamily. Classic translation factor GTPase family. EF-Tu/EF-1A subfamily. In terms of assembly, monomer.

It is found in the cytoplasm. It catalyses the reaction GTP + H2O = GDP + phosphate + H(+). Functionally, GTP hydrolase that promotes the GTP-dependent binding of aminoacyl-tRNA to the A-site of ribosomes during protein biosynthesis. In Brucella anthropi (strain ATCC 49188 / DSM 6882 / CCUG 24695 / JCM 21032 / LMG 3331 / NBRC 15819 / NCTC 12168 / Alc 37) (Ochrobactrum anthropi), this protein is Elongation factor Tu.